Reading from the N-terminus, the 201-residue chain is Dynactin subunit 6 (201 aa).

This sequence belongs to the dynactin subunits 5/6 family. Dynactin subunit 6 subfamily. As to quaternary structure, member of the pointed-end complex of the dynactin shoulder complex which contains dctn4, dctn5 and dctn6 subunits and Actr10. Within the complex dctn6 forms a heterodimer with dctn5. Interacts with plk1.

The protein resides in the cytoplasm. It is found in the cytoskeleton. Its subcellular location is the chromosome. The protein localises to the centromere. It localises to the kinetochore. Functionally, part of the dynactin complex that activates the molecular motor dynein for ultra-processive transport along microtubules. In Xenopus tropicalis (Western clawed frog), this protein is Dynactin subunit 6 (dctn6).